The primary structure comprises 96 residues: Large ribosomal subunit protein eL43 (96 aa).

The C4-type zinc-finger motif lies at 41–62 (CPVCAFPKLKRVGTSIWVCDKC).

It belongs to the eukaryotic ribosomal protein eL43 family. The cofactor is Zn(2+).

In Methanococcus maripaludis (strain C6 / ATCC BAA-1332), this protein is Large ribosomal subunit protein eL43.